A 462-amino-acid polypeptide reads, in one-letter code: Glycine--tRNA ligase (462 aa).

Residues R100 and E174 each coordinate substrate. Residues 206–208, 216–221, 290–291, and 334–337 contribute to the ATP site; these read RNE, FRTREF, EL, and GADR. 221–225 provides a ligand contact to substrate; it reads FEQME. Residue 330–334 participates in substrate binding; that stretch reads EPSLG.

Belongs to the class-II aminoacyl-tRNA synthetase family. As to quaternary structure, homodimer.

It localises to the cytoplasm. It carries out the reaction tRNA(Gly) + glycine + ATP = glycyl-tRNA(Gly) + AMP + diphosphate. Catalyzes the attachment of glycine to tRNA(Gly). This chain is Glycine--tRNA ligase, found in Alkaliphilus metalliredigens (strain QYMF).